The primary structure comprises 305 residues: Nitrogen assimilation regulatory protein nac (305 aa).

One can recognise an HTH lysR-type domain in the interval 1 to 58; that stretch reads MNLRRLKYFVKIVDIGSLTQAAEVLHIAQPALSQQVATLEGEMDQQLLIRTKRGVTPT. Residues 18–37 constitute a DNA-binding region (H-T-H motif); it reads LTQAAEVLHIAQPALSQQVA.

The protein belongs to the LysR transcriptional regulatory family.

In terms of biological role, transcriptional activator for the hut, put and ure operons and repressor for the gdh and gltB operons in response to nitrogen limitation. Negative regulator of its own expression. The protein is Nitrogen assimilation regulatory protein nac (nac) of Klebsiella aerogenes (Enterobacter aerogenes).